The following is a 440-amino-acid chain: Adenosylhomocysteinase (440 aa).

Positions 64, 139, and 164 each coordinate substrate. 165 to 167 is an NAD(+) binding site; it reads TTT. Lysine 194 and aspartate 198 together coordinate substrate. NAD(+)-binding positions include asparagine 199, 228–233, glutamate 251, asparagine 286, 307–309, and asparagine 352; these read GFGDVG and IGH.

The protein belongs to the adenosylhomocysteinase family. NAD(+) serves as cofactor.

The protein localises to the cytoplasm. It catalyses the reaction S-adenosyl-L-homocysteine + H2O = L-homocysteine + adenosine. The protein operates within amino-acid biosynthesis; L-homocysteine biosynthesis; L-homocysteine from S-adenosyl-L-homocysteine: step 1/1. May play a key role in the regulation of the intracellular concentration of adenosylhomocysteine. The sequence is that of Adenosylhomocysteinase from Granulibacter bethesdensis (strain ATCC BAA-1260 / CGDNIH1).